A 284-amino-acid polypeptide reads, in one-letter code: Shikimate kinase (284 aa).

ATP is bound at residue 85–95 (PLAAGLKSSSA).

This sequence belongs to the GHMP kinase family. Archaeal shikimate kinase subfamily.

The protein localises to the cytoplasm. It carries out the reaction shikimate + ATP = 3-phosphoshikimate + ADP + H(+). It participates in metabolic intermediate biosynthesis; chorismate biosynthesis; chorismate from D-erythrose 4-phosphate and phosphoenolpyruvate: step 5/7. In Halobacterium salinarum (strain ATCC 29341 / DSM 671 / R1), this protein is Shikimate kinase.